The chain runs to 218 residues: Protein THO1 (218 aa).

An SAP domain is found at 4-38; it reads YSSLTVVQLKDLLTKRNLSVGGLKNELVQRLIKDD. Position 22 is a phosphoserine (Ser22). 2 disordered regions span residues 37–123 and 177–218; these read DDEE…LSPE and LVSR…GYRR. Polar residues predominate over residues 47-57; it reads VSPQEQNQEQG. 2 positions are modified to phosphoserine: Ser58 and Ser68. Residues 72–96 are compositionally biased toward basic and acidic residues; the sequence is TEKKEVSSEPKETNEPKEENKDVQK. Low complexity-rich tracts occupy residues 102–122 and 186–203; these read SATA…ALSP and SGNN…NNRS. Residues 204-218 are compositionally biased toward basic residues; the sequence is RVSKNRRGNRSGYRR.

The protein belongs to the SAP domain-containing ribonucleoprotein family. As to quaternary structure, interacts with SUB2 in the presence of RNA; this interaction facilitates RNA binding of SUB2.

Facilitates RNA binding of SUB2 and likely plays a role in mRNA export. Suppressor of the transcriptional defect of HPR1 by overexpression. In Saccharomyces cerevisiae (strain ATCC 204508 / S288c) (Baker's yeast), this protein is Protein THO1 (THO1).